The sequence spans 291 residues: MKSGFVSIIGRTNAGKSTLINSLLEEKIALVSHKQNATRRKIKAIVMHEKNQIIFIDTPGLHESGATLNQLLVQSAIKSMGDCDVILFVASVFDSTKDYENFLSLNPQVPHIIALNKVDLTDNATLLKKLSEYAKFSQHFKAIIPYSSKKKSYKKGLLDEIVKYLDEHEYFYNPEFLSASSEKELYRDFILESIYENLSDELPYSSEVLINRTKDTPNLLILEANIITDTNSHKGMLIGKEGATLKRIGKDARFKISKLAQKKVLLKLFVTVKKNWQKDEEFLKKLLNDEN.

An Era-type G domain is found at 2–167 (KSGFVSIIGR…LDEIVKYLDE (166 aa)). The interval 10–17 (GRTNAGKS) is G1. Residue 10–17 (GRTNAGKS) participates in GTP binding. Residues 36 to 40 (NATRR) form a G2 region. The segment at 57–60 (DTPG) is G3. GTP contacts are provided by residues 57 to 61 (DTPGL) and 116 to 119 (NKVD). The G4 stretch occupies residues 116–119 (NKVD). The segment at 146–148 (YSS) is G5. One can recognise a KH type-2 domain in the interval 186-274 (YRDFILESIY…LLKLFVTVKK (89 aa)).

Belongs to the TRAFAC class TrmE-Era-EngA-EngB-Septin-like GTPase superfamily. Era GTPase family. In terms of assembly, monomer.

The protein resides in the cytoplasm. It localises to the cell inner membrane. An essential GTPase that binds both GDP and GTP, with rapid nucleotide exchange. Plays a role in 16S rRNA processing and 30S ribosomal subunit biogenesis and possibly also in cell cycle regulation and energy metabolism. The sequence is that of GTPase Era from Campylobacter jejuni (strain RM1221).